A 143-amino-acid polypeptide reads, in one-letter code: Large ribosomal subunit protein uL11 (143 aa).

This sequence belongs to the universal ribosomal protein uL11 family. As to quaternary structure, part of the ribosomal stalk of the 50S ribosomal subunit. Interacts with L10 and the large rRNA to form the base of the stalk. L10 forms an elongated spine to which L12 dimers bind in a sequential fashion forming a multimeric L10(L12)X complex. Post-translationally, one or more lysine residues are methylated.

In terms of biological role, forms part of the ribosomal stalk which helps the ribosome interact with GTP-bound translation factors. This chain is Large ribosomal subunit protein uL11, found in Zymomonas mobilis subsp. mobilis (strain ATCC 31821 / ZM4 / CP4).